The sequence spans 330 residues: Polyprenyl transferase ausN (330 aa).

Transmembrane regions (helical) follow at residues 116–136 (AATI…LFLP), 165–185 (LILI…GMEP), 189–209 (ILSM…IDLV), 238–258 (AYSL…LGGL), and 260–280 (VPFV…FLRA).

Belongs to the UbiA prenyltransferase family. The cofactor is Mg(2+).

The protein localises to the membrane. It catalyses the reaction 3,5-dimethylorsellinate + (2E,6E)-farnesyl diphosphate = (3R)-3-farnesyl-6-hydroxy-2,3,5-trimethyl-4-oxocyclohexa-1,5-diene-1-carboxylate + diphosphate + H(+). It functions in the pathway secondary metabolite biosynthesis; terpenoid biosynthesis. Its function is as follows. Polyprenyl transferase; part of the gene cluster B that mediates the biosynthesis of austinol and dehydroaustinol, two fungal meroterpenoids. The first step of the pathway is the synthesis of 3,5-dimethylorsellinic acid by the polyketide synthase ausA. 3,5-dimethylorsellinic acid is then prenylated by the polyprenyl transferase ausN. Further epoxidation by the FAD-dependent monooxygenase ausM and cyclization by the probable terpene cyclase ausL lead to the formation of protoaustinoid A. Protoaustinoid A is then oxidized to spiro-lactone preaustinoid A3 by the combined action of the FAD-binding monooxygenases ausB and ausC, and the dioxygenase ausE. Acid-catalyzed keto-rearrangement and ring contraction of the tetraketide portion of preaustinoid A3 by ausJ lead to the formation of preaustinoid A4. The aldo-keto reductase ausK, with the help of ausH, is involved in the next step by transforming preaustinoid A4 into isoaustinone which is in turn hydroxylated by the P450 monooxygenase ausI to form austinolide. Finally, the cytochrome P450 monooxygenase ausG modifies austinolide to austinol. Austinol can be further modified to dehydroaustinol which forms a diffusible complex with diorcinol that initiates conidiation. Due to genetic rearrangements of the clusters and the subsequent loss of some enzymes, the end products of the Emericella nidulans austinoid biosynthesis clusters are austinol and dehydroaustinol, even if additional enzymes, such as the O-acetyltransferase ausQ and the cytochrome P450 monooxygenase ausR are still functional. This is Polyprenyl transferase ausN from Emericella nidulans (strain FGSC A4 / ATCC 38163 / CBS 112.46 / NRRL 194 / M139) (Aspergillus nidulans).